The following is a 544-amino-acid chain: CRISPR-associated endodeoxyribonuclease Cas12f2 (544 aa).

Residues 1–195 (MNMSKTTISV…KPNERETRYV (195 aa)) form a recognition domain (REC) region. The wedge domain (WED) stretch occupies residues 196–326 (HISKLESPSK…YLQYTYEAEV (131 aa)). The linker stretch occupies residues 327 to 334 (EANKEYAG). The interval 335–485 (CLGVDIGCSK…VYVKPDYTSQ (151 aa)) is ruvC-I. Residues aspartate 339 and glutamate 430 contribute to the active site. A target nucleic acid-binding (TNB) region spans residues 486 to 520 (TCSSCGADKEKTERPSQAIFRCLNPTCRYYQRDIN). Cysteine 487, cysteine 490, cysteine 507, and cysteine 512 together coordinate Zn(2+). The ruvC-II stretch occupies residues 521 to 541 (ADFNAAVNIAKKALNNTEVVT). Aspartate 522 is an active-site residue.

The protein belongs to the CRISPR-associated endonuclease Cas12f family. An asymmetric homodimer. Guide RNA is probably required for dimerization. It depends on Mg(2+) as a cofactor. Zn(2+) serves as cofactor.

CRISPR (clustered regularly interspaced short palindromic repeat), is an adaptive immune system that provides protection against mobile genetic elements (viruses, transposable elements and conjugative plasmids). CRISPR clusters contain sequences complementary to antecedent mobile elements and target invading nucleic acids. CRISPR clusters are transcribed and processed into CRISPR RNA (crRNA), which requires a trans-encoded small RNA (tracrRNA), but not this protein (in vitro). Recognizes a short motif in the CRISPR repeat sequences (the 5' PAM or protospacer adjacent motif, TTAT in this organism) to help distinguish self versus nonself, as targets within the CRISPR locus do not have PAMs. Upon expression in E.coli of this protein, a mini CRISPR array and the probable tracrRNA, has dsDNA endonuclease activity. DNA cleavage is centered around positions 21 base pairs 3' of PAM. The mini system does not protect E.coli against transformation by foreign plasmids. This Micrarchaeota archaeon (strain CG1_02_47_40) protein is CRISPR-associated endodeoxyribonuclease Cas12f2.